The primary structure comprises 248 residues: Ribosomal RNA small subunit methyltransferase J (248 aa).

Residues 98-99 (RD), 114-115 (ER), 150-151 (SS), and Asp168 contribute to the S-adenosyl-L-methionine site.

Belongs to the methyltransferase superfamily. RsmJ family.

Its subcellular location is the cytoplasm. It catalyses the reaction guanosine(1516) in 16S rRNA + S-adenosyl-L-methionine = N(2)-methylguanosine(1516) in 16S rRNA + S-adenosyl-L-homocysteine + H(+). Its function is as follows. Specifically methylates the guanosine in position 1516 of 16S rRNA. The chain is Ribosomal RNA small subunit methyltransferase J from Shewanella baltica (strain OS223).